The chain runs to 130 residues: Prefoldin subunit alpha (130 aa).

It belongs to the prefoldin subunit alpha family. As to quaternary structure, heterohexamer of two alpha and four beta subunits.

The protein resides in the cytoplasm. Its function is as follows. Molecular chaperone capable of stabilizing a range of proteins. Seems to fulfill an ATP-independent, HSP70-like function in archaeal de novo protein folding. The polypeptide is Prefoldin subunit alpha (pfdA) (Thermoplasma acidophilum (strain ATCC 25905 / DSM 1728 / JCM 9062 / NBRC 15155 / AMRC-C165)).